The following is a 479-amino-acid chain: MTMIALNREVETQSLKKLSLKSVRRAREIFSPVHGQFPQPDPESKRIRLCHKIQVAFGGVEPASKPTRIADHNSEKTAPLKALALPGPKGSKELRKSATEKALVVGPTLPPRDLNNTGNPGKSTAILPAPGSFSERNLSTAALMERMPSRWPRPEWHAPWKNYRVLQGHLGWVRSVAFDPSNEWFCTGSADRTIKIWDVATGVLKLTLTGHIGQVRGLAVSNRHTYMFSAGDDKQVKCWDLEQNKVIRSYHGHLHGVYCLALHPTLDVVLTGGRDSVCRVWDIRTKMQIFVLPHDSDVFSVLARPTDPQVITGSHDSTIKFWDLRYGKSMATITNHKKTVRAMALHPKENDFVSASADNIKKFSLPKGEFCHNMLSLQRDIINAVAVNEDGVMVTGGDKGGLWFWDWKSGHNFQRAETIVQPGSLESEAGIYAACYDQTGSRLVTCEGDKTIKMWKEDEDATPETHPLNFKPPKEIRRF.

7 WD repeats span residues 168–198, 210–240, 252–282, 293–323, 335–364, 377–406, and 426–456; these read GHLGWVRSVAFDPSNEWFCTGSADRTIKIWD, GHIGQVRGLAVSNRHTYMFSAGDDKQVKCWD, GHLHGVYCLALHPTLDVVLTGGRDSVCRVWD, PHDSDVFSVLARPTDPQVITGSHDSTIKFWD, NHKKTVRAMALHPKENDFVSASADNIKKFS, LQRDIINAVAVNEDGVMVTGGDKGGLWFWD, and ESEAGIYAACYDQTGSRLVTCEGDKTIKMWK. 2 consecutive short sequence motifs (DWD box) follow at residues 269-284 and 310-325; these read VLTGGRDSVCRVWDIR and VITGSHDSTIKFWDLR. The tract at residues 458–479 is disordered; sequence DEDATPETHPLNFKPPKEIRRF.

Belongs to the WD repeat PRL1/PRL2 family.

Pleiotropic regulator. The protein is Protein pleiotropic regulator PRL2 (PRL2) of Arabidopsis thaliana (Mouse-ear cress).